Consider the following 344-residue polypeptide: CRISPR-associated endonuclease Cas1 2 (344 aa).

Residues Glu-167, His-235, and Glu-250 each contribute to the Mn(2+) site.

This sequence belongs to the CRISPR-associated endonuclease Cas1 family. As to quaternary structure, homodimer, forms a heterotetramer with a Cas2 homodimer. Mg(2+) serves as cofactor. Requires Mn(2+) as cofactor.

Functionally, CRISPR (clustered regularly interspaced short palindromic repeat), is an adaptive immune system that provides protection against mobile genetic elements (viruses, transposable elements and conjugative plasmids). CRISPR clusters contain spacers, sequences complementary to antecedent mobile elements, and target invading nucleic acids. CRISPR clusters are transcribed and processed into CRISPR RNA (crRNA). Acts as a dsDNA endonuclease. Involved in the integration of spacer DNA into the CRISPR cassette. The chain is CRISPR-associated endonuclease Cas1 2 from Rhodospirillum rubrum (strain ATCC 11170 / ATH 1.1.1 / DSM 467 / LMG 4362 / NCIMB 8255 / S1).